The following is an 854-amino-acid chain: V-type proton ATPase 116 kDa subunit a 2 (854 aa).

Topologically, residues 1 to 393 (MGSLFRSETM…DAYGVGSYQE (393 aa)) are cytoplasmic. Residues 394–412 (VNPALFTIITFPFLFAVMF) traverse the membrane as a helical segment. The Vacuolar portion of the chain corresponds to 413–414 (GD). A helical membrane pass occupies residues 415 to 431 (FGHGFVMFLFALLLVLN). Residues 432-445 (ENHPRLNQSQEIMR) are Cytoplasmic-facing. Residues 446-475 (MFFNGRYILLLMGLFSVYTGLIYNDCFSKS) form a helical membrane-spanning segment. Residues 476–549 (VNLFGSRWNV…ATNRLTFLNS (74 aa)) are Vacuolar-facing. The chain crosses the membrane as a helical span at residues 550–569 (FKMKMSVILGITHMTFGVIL). Topologically, residues 570-587 (GIFNHLHFRKKFNICLVS) are cytoplasmic. The chain crosses the membrane as a helical span at residues 588–608 (IPELLFMLCIFGYLIFMIIYK). At 609 to 651 (WLVYSAETSRTAPSILIEFISMFLFLASDTGGLYPGQEHVQRL) the chain is on the vacuolar side. The helical transmembrane segment at 652 to 671 (LLLITVLSVPVLFLGKPLFL) threads the bilayer. Residues 672–739 (LWLHRGRSCF…EILMTQIIHS (68 aa)) are Cytoplasmic-facing. Residues serine 695 and serine 700 each carry the phosphoserine modification. Residues 740 to 764 (IEYCLGCISNTASYLRLWALSLAHA) traverse the membrane as a helical segment. The Vacuolar portion of the chain corresponds to 765 to 785 (QLSEVLWAMLMHVGLRVDTAY). A helical transmembrane segment spans residues 786 to 824 (GVLVLLPVIAFFAVLTIFILLIMEGLSAFLHAIRLHWVE). Residues 825–854 (FQNKFYVGAGTKFVPFSFRLLSSKFSDDLA) are Cytoplasmic-facing.

Belongs to the V-ATPase 116 kDa subunit family. As to quaternary structure, V-ATPase is a heteromultimeric enzyme made up of two complexes: the ATP-hydrolytic V1 complex and the proton translocation V0 complex. The V1 complex consists of three catalytic AB heterodimers that form a heterohexamer, three peripheral stalks each consisting of EG heterodimers, one central rotor including subunits D and F, and the regulatory subunits C and H. The proton translocation complex V0 consists of the proton transport subunit a, a ring of proteolipid subunits c9c'', rotary subunit d, subunits e and f, and the accessory subunits ATP6AP1/Ac45 and ATP6AP2/PRR. Directly interacts with PSCD2 through its N-terminal cytosolic tail in an intra-endosomal acidification-dependent manner. Disruption of this interaction results in the inhibition of endocytosis. Interacts with SPAAR. Highly expressed in lung, kidney and spleen.

The protein localises to the cell membrane. It is found in the endosome membrane. In terms of biological role, subunit of the V0 complex of vacuolar(H+)-ATPase (V-ATPase), a multisubunit enzyme composed of a peripheral complex (V1) that hydrolyzes ATP and a membrane integral complex (V0) that translocates protons. V-ATPase is responsible for acidifying and maintaining the pH of intracellular compartments and in some cell types, is targeted to the plasma membrane, where it is responsible for acidifying the extracellular environment. Essential component of the endosomal pH-sensing machinery. May play a role in maintaining the Golgi functions, such as glycosylation maturation, by controlling the Golgi pH. In aerobic conditions, involved in intracellular iron homeostasis, thus triggering the activity of Fe(2+) prolyl hydroxylase (PHD) enzymes, and leading to HIF1A hydroxylation and subsequent proteasomal degradation. The protein is V-type proton ATPase 116 kDa subunit a 2 (ATP6V0A2) of Bos taurus (Bovine).